The primary structure comprises 90 residues: FMRFamide-like neuropeptides 27 (90 aa).

The N-terminal stretch at 1–24 (MFSFRKFLAFMLIVIALMASFSSA) is a signal peptide. Positions 25-36 (QPIDEERPIFME) are excised as a propeptide. Position 61 is a phenylalanine amide (Phe61). Residues 65–90 (SSSPSDISMAELRAIYGGGPVEYVQL) constitute a propeptide that is removed on maturation.

Belongs to the FARP (FMRFamide related peptide) family.

The protein resides in the secreted. FMRFamides and FMRFamide-like peptides are neuropeptides. The polypeptide is FMRFamide-like neuropeptides 27 (Caenorhabditis briggsae).